The sequence spans 118 residues: MARVKRGVIARRRHKKILKLAKGYYGARSRVFRVAKQAVIKAGQYAYRDRRQRKRQFRALWIARINAGDRQNGLSYSRLIAGLKKATIEIDRKVLSDLAVNEKAAFAAIVEKAKAVLA.

Belongs to the bacterial ribosomal protein bL20 family.

Functionally, binds directly to 23S ribosomal RNA and is necessary for the in vitro assembly process of the 50S ribosomal subunit. It is not involved in the protein synthesizing functions of that subunit. This chain is Large ribosomal subunit protein bL20, found in Azotobacter vinelandii.